Here is a 148-residue protein sequence, read N- to C-terminus: Small ribosomal subunit protein eS19G (148 aa).

The protein belongs to the eukaryotic ribosomal protein eS19 family.

In terms of biological role, elimination of the ALEP-1 gene from all somatic cells in its fully activate state may represent an alternative way to gene regulation. The protein is Small ribosomal subunit protein eS19G (RPS19G) of Ascaris suum (Pig roundworm).